The chain runs to 312 residues: Acetyl-coenzyme A carboxylase carboxyl transferase subunit alpha (312 aa).

Residues 36-286 (RLEKEVKSIY…KEYFLDALRT (251 aa)) form the CoA carboxyltransferase C-terminal domain.

This sequence belongs to the AccA family. As to quaternary structure, acetyl-CoA carboxylase is a heterohexamer composed of biotin carboxyl carrier protein (AccB), biotin carboxylase (AccC) and two subunits each of ACCase subunit alpha (AccA) and ACCase subunit beta (AccD).

The protein resides in the cytoplasm. It carries out the reaction N(6)-carboxybiotinyl-L-lysyl-[protein] + acetyl-CoA = N(6)-biotinyl-L-lysyl-[protein] + malonyl-CoA. The protein operates within lipid metabolism; malonyl-CoA biosynthesis; malonyl-CoA from acetyl-CoA: step 1/1. In terms of biological role, component of the acetyl coenzyme A carboxylase (ACC) complex. First, biotin carboxylase catalyzes the carboxylation of biotin on its carrier protein (BCCP) and then the CO(2) group is transferred by the carboxyltransferase to acetyl-CoA to form malonyl-CoA. This chain is Acetyl-coenzyme A carboxylase carboxyl transferase subunit alpha, found in Helicobacter pylori (strain P12).